Here is a 426-residue protein sequence, read N- to C-terminus: Enolase (426 aa).

Gln163 is a (2R)-2-phosphoglycerate binding site. Glu205 serves as the catalytic Proton donor. Residues Asp242, Glu286, and Asp313 each coordinate Mg(2+). (2R)-2-phosphoglycerate-binding residues include Lys338, Arg367, Ser368, and Lys389. Residue Lys338 is the Proton acceptor of the active site.

It belongs to the enolase family. Requires Mg(2+) as cofactor.

The protein resides in the cytoplasm. It is found in the secreted. The protein localises to the cell surface. The catalysed reaction is (2R)-2-phosphoglycerate = phosphoenolpyruvate + H2O. It functions in the pathway carbohydrate degradation; glycolysis; pyruvate from D-glyceraldehyde 3-phosphate: step 4/5. Catalyzes the reversible conversion of 2-phosphoglycerate (2-PG) into phosphoenolpyruvate (PEP). It is essential for the degradation of carbohydrates via glycolysis. This is Enolase from Helicobacter pylori (strain HPAG1).